The chain runs to 523 residues: Asc-type amino acid transporter 1 (523 aa).

The segment at 1 to 28 is disordered; it reads MAGHTQQPSGRGNPRPAPSPSPVPGTVP. The segment covering 15-25 has biased composition (pro residues); the sequence is RPAPSPSPVPG. A run of 9 helical transmembrane segments spans residues 40-60, 72-92, 113-133, 268-288, 310-330, 362-382, 388-408, 424-444, and 448-468; these read IGLL…GIFI, VGLA…GSLC, IFGG…MYPT, AIFI…IAYF, LLGY…FGGI, CTPI…MLVG, INYV…GLLL, LLIP…SFIS, and VCGV…LGVF. The disordered stretch occupies residues 499–523; sequence APEEEENGPCPPSLLPATDKPSKPQ.

Belongs to the amino acid-polyamine-organocation (APC) superfamily. In terms of assembly, disulfide-linked heterodimer with the amino acid transport protein SLC3A2/4F2hc. As to expression, expressed in brain, heart, kidney, liver, lung, pancreas, placenta, and skeletal muscle.

It is found in the cell membrane. The catalysed reaction is L-alanine(in) + glycine(out) = L-alanine(out) + glycine(in). The enzyme catalyses L-serine(out) + L-alanine(in) = L-serine(in) + L-alanine(out). It carries out the reaction L-threonine(out) + L-alanine(in) = L-threonine(in) + L-alanine(out). It catalyses the reaction L-cysteine(out) + L-alanine(in) = L-cysteine(in) + L-alanine(out). The catalysed reaction is 2-aminoisobutanoate(out) + L-alanine(in) = 2-aminoisobutanoate(in) + L-alanine(out). The enzyme catalyses D-serine(out) + L-alanine(in) = D-serine(in) + L-alanine(out). It carries out the reaction D-alanine(out) + L-alanine(in) = D-alanine(in) + L-alanine(out). It catalyses the reaction L-valine(out) + L-alanine(in) = L-valine(in) + L-alanine(out). The catalysed reaction is L-methionine(out) + L-alanine(in) = L-methionine(in) + L-alanine(out). The enzyme catalyses beta-alanine(out) + L-alanine(in) = beta-alanine(in) + L-alanine(out). It carries out the reaction D-cysteine(out) + L-alanine(in) = D-cysteine(in) + L-alanine(out). It catalyses the reaction D-threonine(out) + L-alanine(in) = D-threonine(in) + L-alanine(out). The catalysed reaction is D-isoleucine(out) + D-serine(in) = D-isoleucine(in) + D-serine(out). The enzyme catalyses D-serine(in) = D-serine(out). In terms of biological role, associates with SLC3A2/4F2hc to form a functional heterodimeric complex that translocates small neutral L- and D-amino acids across the plasma membrane. Preferentially mediates exchange transport, but can also operate via facilitated diffusion. Acts as a major transporter for glycine, L- and D-serine in the central nervous system. At the spinal cord and brainstem regulates glycine metabolism and glycinergic inhibitory neurotransmission by providing for glycine de novo synthesis from L-serine and glycine recycling from astrocytes to glycinergic motor neurons. At Schaffer collateral-CA1 synapses mediates D-serine and glycine release that modulates post-synaptic activation of NMDA receptors and excitatory glutamatergic transmission. May regulate D-serine release from mesenchymal progenitors located in developing subcutaneous adipose tissue, favoring white adipocyte over thermogenic beige adipocyte lineage commitment. In Homo sapiens (Human), this protein is Asc-type amino acid transporter 1 (SLC7A10).